A 219-amino-acid polypeptide reads, in one-letter code: Abasic site processing protein YobE (219 aa).

Cys2 (nucleophile) is an active-site residue. Cys2 carries the post-translational modification Thiazolidine linkage to a ring-opened DNA abasic site. Glu106 is a catalytic residue.

Belongs to the SOS response-associated peptidase family.

Its activity is regulated as follows. Formation and reversal of DNA-protein cross-link depends on DNA context. Catalyzes formation of the thiazolidine linkage in presence of abasic sites in single-stranded DNA. Mediates the reversal of the thiazolidine cross-link in presence of double stranded DNA. In terms of biological role, sensor of abasic sites in single-stranded DNA (ssDNA) required to preserve genome integrity by promoting error-free repair of abasic sites. Recognizes and binds abasic sites in ssDNA at replication forks and chemically modifies the lesion by forming a covalent cross-link with DNA: forms a stable thiazolidine linkage between a ring-opened abasic site and the alpha-amino and sulfhydryl substituents of its N-terminal catalytic cysteine residue. The DNA-protein cross-link is then reversed: able to catalyze the reversal of the thiazolidine cross-link and cycle between a cross-link and a non-cross-linked state depending on DNA context: mediates self-reversal of the thiazolidine cross-link in double stranded DNA. May act as a protease: mediates autocatalytic processing of its N-terminal methionine in order to expose the catalytic cysteine. This Bacillus subtilis (strain 168) protein is Abasic site processing protein YobE (yobE).